The chain runs to 312 residues: Olfactory receptor 1J21 (312 aa).

7 helical membrane-spanning segments follow: residues 29–49 (ALFL…ILLI), 58–78 (PMYF…SVTA), 95–115 (AGCV…NFLL), 143–163 (LLVM…TLLF), 197–217 (LVIL…ILVS), 241–261 (CGSH…LYFF), and 272–292 (VIVA…IYSL).

This sequence belongs to the G-protein coupled receptor 1 family.

Its subcellular location is the cell membrane. Odorant receptor. Activated by (+) and (-)-carvone. This Mus musculus (Mouse) protein is Olfactory receptor 1J21.